A 508-amino-acid chain; its full sequence is NADH-quinone oxidoreductase subunit N 2 (508 aa).

14 helical membrane passes run 14 to 34 (SYVAILPHLIVTATLLVVIVL), 43 to 63 (SLVWVTLGGVVLAMLSIWYTA), 90 to 110 (FTFFMNGVLLGIAALVILLSA), 119 to 139 (GAHMEFYEIILAVTLGMMFMV), 144 to 164 (LLTIYIGLELTSISSYVLAGI), 179 to 199 (FLTGATASAVLLFGLSLIYGV), 223 to 243 (GPALTPLLVAGMAFLMVGFGF), 275 to 295 (GAAMAAILRVFVGGLGVAPFT), 298 to 318 (WALIWALAAAASMTVGNLVAL), 327 to 347 (MAYSSIAQAGYILVGVAASGL), 353 to 373 (ISSVLFYVMAYAVTNLGIFAV), 400 to 420 (AWALLLFFVSLIGIPPTVGFL), 433 to 455 (GYLWLAVLMAVNSVISVGYYYRV), and 473 to 493 (TGISATVLLSLLGVVALTIFA).

It belongs to the complex I subunit 2 family. As to quaternary structure, NDH-1 is composed of 14 different subunits. Subunits NuoA, H, J, K, L, M, N constitute the membrane sector of the complex.

Its subcellular location is the cell membrane. The enzyme catalyses a quinone + NADH + 5 H(+)(in) = a quinol + NAD(+) + 4 H(+)(out). In terms of biological role, NDH-1 shuttles electrons from NADH, via FMN and iron-sulfur (Fe-S) centers, to quinones in the respiratory chain. The immediate electron acceptor for the enzyme in this species is believed to be a menaquinone. Couples the redox reaction to proton translocation (for every two electrons transferred, four hydrogen ions are translocated across the cytoplasmic membrane), and thus conserves the redox energy in a proton gradient. This chain is NADH-quinone oxidoreductase subunit N 2, found in Symbiobacterium thermophilum (strain DSM 24528 / JCM 14929 / IAM 14863 / T).